Consider the following 90-residue polypeptide: Probable Fe(2+)-trafficking protein (90 aa).

Belongs to the Fe(2+)-trafficking protein family.

Could be a mediator in iron transactions between iron acquisition and iron-requiring processes, such as synthesis and/or repair of Fe-S clusters in biosynthetic enzymes. The protein is Probable Fe(2+)-trafficking protein of Cupriavidus necator (strain ATCC 17699 / DSM 428 / KCTC 22496 / NCIMB 10442 / H16 / Stanier 337) (Ralstonia eutropha).